The following is a 259-amino-acid chain: uncharacterized protein (259 aa).

Residues 1-159 (MIEQFFRPDS…TEIIIKDPYR (159 aa)) enclose the FAD-binding PCMH-type domain.

This is an uncharacterized protein from Escherichia coli O157:H7.